The following is a 317-amino-acid chain: Ribosomal RNA small subunit methyltransferase H (317 aa).

Residues 39–41 (GGH), aspartate 59, phenylalanine 83, aspartate 104, and glutamine 111 contribute to the S-adenosyl-L-methionine site.

It belongs to the methyltransferase superfamily. RsmH family.

The protein resides in the cytoplasm. It carries out the reaction cytidine(1402) in 16S rRNA + S-adenosyl-L-methionine = N(4)-methylcytidine(1402) in 16S rRNA + S-adenosyl-L-homocysteine + H(+). Functionally, specifically methylates the N4 position of cytidine in position 1402 (C1402) of 16S rRNA. The chain is Ribosomal RNA small subunit methyltransferase H from Paraburkholderia phytofirmans (strain DSM 17436 / LMG 22146 / PsJN) (Burkholderia phytofirmans).